Reading from the N-terminus, the 589-residue chain is Aspartate--tRNA ligase (589 aa).

Residue Glu-175 participates in L-aspartate binding. The aspartate stretch occupies residues 199-202 (QIFK). Arg-221 provides a ligand contact to L-aspartate. ATP-binding positions include 221-223 (RDE) and Gln-230. L-aspartate is bound at residue His-449. ATP is bound at residue Glu-483. Arg-490 is an L-aspartate binding site. 535-538 (GLDR) contributes to the ATP binding site.

Belongs to the class-II aminoacyl-tRNA synthetase family. Type 1 subfamily. Homodimer.

It localises to the cytoplasm. The catalysed reaction is tRNA(Asp) + L-aspartate + ATP = L-aspartyl-tRNA(Asp) + AMP + diphosphate. In terms of biological role, catalyzes the attachment of L-aspartate to tRNA(Asp) in a two-step reaction: L-aspartate is first activated by ATP to form Asp-AMP and then transferred to the acceptor end of tRNA(Asp). The protein is Aspartate--tRNA ligase of Shouchella clausii (strain KSM-K16) (Alkalihalobacillus clausii).